We begin with the raw amino-acid sequence, 1330 residues long: MVGGGSAQKLTTNDALAYLKAVKDKFQDQRGKYDEFLEVMKNFKSQRVDTAGVITRVKELFKGHQELILGFNTFLPKGFEITLQPEDGQPPLKKRVEFEEAISFVNKIKTRFQGDDRVYKSFLDILNMYRRDSKSITEVYQEVAILFRDHSDLLVEFTHFLPDTSATASIPSVKTSVRERGVSLADKKDRIITPHPDHDYGTEHIDQDRERPIKKENKEHMRGTNKENEHRDARDFEPHSKKEQFLNKKQKLHIRGDDPAEISNQSKLSGAVPSSSTYDEKGAMKSYSQDLAIVDRVKEKLNASEYQEFLRCLNLFSKEIISRPELQSLVGNLIGVYPDLMDSFIEFLVQCEKNEGLLSGILTKSKSTYLLQGEGKYPQPSLDNDRDQEHKRDDGLRDRDHEKERLEKAAANLKWAKPISELDLSNCEQCTPSYRLLPKNYPISIASQKTEIGKLVLNDHWVSVTSGSEDYSFSHMRKNQYEESLFKCEDDRFELDMLLESVNSTTKHVEELLTKINSNELKTNSPIRVEDHLTALNLRCIERLYGDHGLDVMDVLKKNVSLALPVILTRLKQKQEEWARCRSDFDKVWAEIYAKNYYKSLDHRSFYFKQQDSKKLSMKALLAEIKEITEKKREDDSLLAFAAGNRLSISPDLEFDYPDHDLHEDLYQLIKYSCAEMCSTEQLDKVMKIWTTFVEQIFGVPSRPQGAEDQEDVVKSMNQNVKSGSSSAGESEGSPHNYASVADSRRSKSSRKANEHSQLGQTSNSERDGAAGRTSDALCETAQHEKMLKNVVTSDEKPESKQAVSIERAHDSTALAVDGLLDQSNGGSSIVHMTGHCNNNLKPVTCGTELELKMNDGNGPKLEVGNKKLLTNGIAVEITSDQEMAGTSKVEREEGELSPNGDFEEDNFAVYAKTDFETFSKANDSTGNNISGDRSREGEPSCLETRAENDAEGDENAARSSEDSRNEYENGDVSGTESGGGEDPEDDLDNNNKGESEGEAECMADAHDAEENGSALPVSARFLLHVKPLVKYVPSAIALHDKDKDSLKNSQVFYGNDSFYVLFRLHRILYERILSAKVNSSSPEGKWRTSNTKNPTDSYARFMTALYNLLDGTSDNAKFEDDCRAIIGTQSYILFTLDKLIHKFIKHLQVVVADEMDNKLLQLYFYEKSRRPETIFDAVYYDNTRVLLPDENIYRIECRLSTPAKLSIQLMCNGLDKPDVTSVSIDPTFAAYLHNDFLSIQPNAREDRRIYLNRNKRKVCREDEQLYSTDEVKIKNGLECKIACGSSKVSYVLETEDLLVRVKKRRKTLCHNQDSWVRQMRLQYYKNNFL.

PAH domains lie at 8 to 78 (QKLT…LPKG) and 94 to 164 (KRVE…LPDT). Residues 191–246 (IITPHPDHDYGTEHIDQDRERPIKKENKEHMRGTNKENEHRDARDFEPHSKKEQFL) show a composition bias toward basic and acidic residues. Residues 191 to 281 (IITPHPDHDY…VPSSSTYDEK (91 aa)) form a disordered region. Residues 262-277 (ISNQSKLSGAVPSSST) are compositionally biased toward polar residues. Residues 283–351 (AMKSYSQDLA…DSFIEFLVQC (69 aa)) enclose the PAH 3 domain. Disordered stretches follow at residues 373-401 (GEGK…DRDH), 718-775 (NQNV…GRTS), 789-808 (KNVV…SIER), 882-906 (QEMA…FEED), and 920-1002 (SKAN…EAEC). Basic and acidic residues predominate over residues 383 to 401 (DNDRDQEHKRDDGLRDRDH). Residues 723-734 (SGSSSAGESEGS) are compositionally biased toward low complexity. Over residues 789–800 (KNVVTSDEKPES) the composition is skewed to basic and acidic residues. The span at 920 to 932 (SKANDSTGNNISG) shows a compositional bias: polar residues. Basic and acidic residues-rich tracts occupy residues 933 to 949 (DRSR…RAEN) and 956 to 968 (NAAR…RNEY). Residues 980–989 (GGEDPEDDLD) are compositionally biased toward acidic residues. At Ser996 the chain carries Phosphoserine.

Interacts with ERF7 and the histone deacetylase HDA19.

Its subcellular location is the nucleus. Acts as a transcriptional repressor. Interacts with ERF7 to repress genes in abscisic acid and drought stress responses. The heterodimer represses transcription by tethering SNL3 to DNA. The polypeptide is Paired amphipathic helix protein Sin3-like 3 (SNL3) (Arabidopsis thaliana (Mouse-ear cress)).